The following is a 706-amino-acid chain: Acyl-coenzyme A oxidase (706 aa).

The tract at residues Met682–Lys706 is disordered. Residues Pro686–Glu699 are compositionally biased toward basic and acidic residues.

The protein belongs to the acyl-CoA oxidase family. Requires FAD as cofactor.

It is found in the peroxisome. The enzyme catalyses a 2,3-saturated acyl-CoA + O2 = a (2E)-enoyl-CoA + H2O2. Its pathway is lipid metabolism; peroxisomal fatty acid beta-oxidation. This Debaryomyces hansenii (strain ATCC 36239 / CBS 767 / BCRC 21394 / JCM 1990 / NBRC 0083 / IGC 2968) (Yeast) protein is Acyl-coenzyme A oxidase (POX1).